Consider the following 138-residue polypeptide: Trypsin inhibitor DE5 alpha chain (138 aa).

Cys40 and Cys86 form a disulfide bridge.

This sequence belongs to the protease inhibitor I3 (leguminous Kunitz-type inhibitor) family. Heterodimer of an alpha and a beta chain linked by a disulfide bond.

Functionally, inhibition of trypsin. In Adenanthera pavonina (Sandal bead tree), this protein is Trypsin inhibitor DE5 alpha chain.